We begin with the raw amino-acid sequence, 257 residues long: MSQIEFKNVSKVYPNGHVGLKNINLNIEKGEFAVIVGLSGAGKSTLLRSVNRLHDITSGEIFIQGKSITKAHGKALLEMRRNIGMIFQHFNLVKRSSVLRNVLSGRVGYHPTWKMVLGLFPKEDKIKAMDALERVNILDKYNQRSDELSGGQQQRISIARALCQESEIILADEPVASLDPLTTKQVMDDLRKINQELGITILINLHFVDLAKEYGTRIIGLRDGEVVYDGPASEATDDVFSEIYGRTIKEDEKLGVN.

An ABC transporter domain is found at 4–248; that stretch reads IEFKNVSKVY…VFSEIYGRTI (245 aa). Position 37-44 (37-44) interacts with ATP; it reads GLSGAGKS.

This sequence belongs to the ABC transporter superfamily. Phosphonates importer (TC 3.A.1.9.1) family. In terms of assembly, the complex is composed of two ATP-binding proteins (PhnC), two transmembrane proteins (PhnE) and a solute-binding protein (PhnD).

Its subcellular location is the cell membrane. It carries out the reaction phosphonate(out) + ATP + H2O = phosphonate(in) + ADP + phosphate + H(+). Functionally, part of the ABC transporter complex PhnCDE involved in phosphonates import. Responsible for energy coupling to the transport system. This chain is Phosphonates import ATP-binding protein PhnC, found in Staphylococcus aureus (strain COL).